The following is a 60-amino-acid chain: Mastoparan-V (60 aa).

The first 27 residues, 1 to 27 (MKNTILILFTAFIALLGFFGMSAEALA), serve as a signal peptide directing secretion. AXPX repeat units follow at residues 27 to 30 (ADPV), 31 to 34 (ADPL), 35 to 38 (AGPN), and 41 to 44 (ADPE). A propeptide spanning residues 28–45 (DPVADPLAGPNAEADPEA) is cleaved from the precursor. Leu59 is subject to Leucine amide.

This sequence belongs to the MCD family. Mastoparan subfamily. In terms of tissue distribution, expressed by the venom gland.

Its subcellular location is the secreted. It localises to the target cell membrane. Antimicrobial and mast cell degranulating peptide. Has broad spectrum antibacterial activity against both Gram-positive and Gram-negative bacteria (S.aureus MIC=32-64 ug/ml, S.xylosus MIC=3 ug/ml, S.alactolyticus MIC=16 ug/ml, C.koseri MIC=4 ug/ml, E.coli MIC=8 ug/ml, K.pneumoniae MIC=64 ug/ml, P.aerugiosa MIC=256 ug/ml, S.choleraesuis MIC=32 ug/ml, S.typhimurium MIC=32 ug/ml, V.parahamelytics MIC=32 ug/ml). Affects membrane permeability of E.coli. Shows hemolytic activities on sheep, chicken and human erythrocytes. Its mast cell degranulation activity may be related to the activation of G-protein coupled receptors in mast cells as well as interaction with other proteins located in cell endosomal membranes in the mast cells. The sequence is that of Mastoparan-V from Vespa velutina flavitarsus (Asian hornet).